Reading from the N-terminus, the 63-residue chain is Antimicrobial peptide 2 (63 aa).

Residues 1–27 (MAKVPIAFLKFVIVLILFIAMSGMIEA) form the signal peptide. 3 cysteine pairs are disulfide-bonded: Cys-28-Cys-45, Cys-35-Cys-49, and Cys-44-Cys-60.

It belongs to the AMP family. In terms of assembly, homodimer. Seed specific.

The protein resides in the secreted. Its function is as follows. Possesses antifungal activity and is also active on two tested Gram-positive bacteria but is non-toxic for Gram-negative bacteria and cultured human cells. The polypeptide is Antimicrobial peptide 2 (AMP2) (Mirabilis jalapa (Garden four-o'clock)).